Consider the following 177-residue polypeptide: Putative acetyltransferase FG08082 (177 aa).

Residues 81-174 (EEWEQVGLVR…VSIAMVEGPG (94 aa)) enclose the N-acetyltransferase domain.

This sequence belongs to the acetyltransferase family.

It participates in mycotoxin biosynthesis. In terms of biological role, putative acetyltransferase; part of the gene cluster that mediates the biosynthesis of butenolide, a mycotoxin that shows antibiotic activity but does not seem to play a major role in the spread of head blight in wheat. Butenolide is derived from glutamic acid via a 4-acetamido-2-butenoic acid intermediate. The predicted function of the NADH:flavin oxidoreductase FG08077, the cytochrome P450 monooxygenase FG08079, the decarboxylase FG08083, and the putative acetyltransferase FG08082 are consistent with this pathway, however, the respective activities of the butelonide biosynthesis cluster enzymes have still to be experimentally determined. This Gibberella zeae (strain ATCC MYA-4620 / CBS 123657 / FGSC 9075 / NRRL 31084 / PH-1) (Wheat head blight fungus) protein is Putative acetyltransferase FG08082.